A 101-amino-acid chain; its full sequence is Small ribosomal subunit protein bS18c (101 aa).

It belongs to the bacterial ribosomal protein bS18 family. Part of the 30S ribosomal subunit.

Its subcellular location is the plastid. The protein localises to the chloroplast. The polypeptide is Small ribosomal subunit protein bS18c (rps18) (Arabidopsis thaliana (Mouse-ear cress)).